Here is a 184-residue protein sequence, read N- to C-terminus: Class II hydrophobin 6 (184 aa).

A signal peptide spans 1 to 16 (MNFMLLSAALASMAVA). Intrachain disulfides connect Cys122/Cys169, Cys130/Cys160, Cys131/Cys143, and Cys170/Cys181.

It belongs to the cerato-ulmin hydrophobin family. Homotetramer. Further self-assembles to form highly ordered films at water-air interfaces through intermolecular interactions. Expressed in the mycellium.

Its subcellular location is the secreted. Functionally, aerial growth, conidiation, and dispersal of filamentous fungi in the environment rely upon a capability of their secreting small amphipathic proteins called hydrophobins (HPBs) with low sequence identity. Class I can self-assemble into an outermost layer of rodlet bundles on aerial cell surfaces, conferring cellular hydrophobicity that supports fungal growth, development and dispersal; whereas Class II form highly ordered films at water-air interfaces through intermolecular interactions but contribute nothing to the rodlet structure. Hcf-6 is a class II hydrophobin that is involved in adhesion and in tomato plants infection. Is secreted to form a coat both around and beneath the fungus. The protein is Class II hydrophobin 6 of Passalora fulva (Tomato leaf mold).